The following is a 258-amino-acid chain: Distal membrane-arm assembly complex protein 2 (258 aa).

Belongs to the ATP synthase subunit s family. As to quaternary structure, interacts with incompletely assembled mitochondrial NADH:ubiquinone oxidoreductase complex (complex I).

The protein resides in the mitochondrion. In terms of biological role, required for the assembly of the mitochondrial NADH:ubiquinone oxidoreductase complex (complex I). Involved in the assembly of the distal region of complex I. The protein is Distal membrane-arm assembly complex protein 2 (Dmac2) of Mus musculus (Mouse).